A 360-amino-acid chain; its full sequence is sn-glycerol-3-phosphate import ATP-binding protein UgpC (360 aa).

The ABC transporter domain maps to 4 to 235 (LSLKGVKKSY…PATTFVASFI (232 aa)). Residue 37-44 (GPSGCGKS) coordinates ATP.

This sequence belongs to the ABC transporter superfamily. sn-glycerol-3-phosphate importer (TC 3.A.1.1.3) family. As to quaternary structure, the complex is composed of two ATP-binding proteins (UgpC), two transmembrane proteins (UgpA and UgpE) and a solute-binding protein (UgpB).

The protein resides in the cell inner membrane. It catalyses the reaction sn-glycerol 3-phosphate(out) + ATP + H2O = sn-glycerol 3-phosphate(in) + ADP + phosphate + H(+). In terms of biological role, part of the ABC transporter complex UgpBAEC involved in sn-glycerol-3-phosphate (G3P) import. Responsible for energy coupling to the transport system. The chain is sn-glycerol-3-phosphate import ATP-binding protein UgpC from Burkholderia mallei (strain ATCC 23344).